The primary structure comprises 61 residues: Alpha-conotoxin PnIB (61 aa).

An N-terminal signal peptide occupies residues 1-21; that stretch reads MGMRMMFTVFLLVVLATTVVS. A propeptide spanning residues 22–44 is cleaved from the precursor; that stretch reads FTSDRASDDGNAAASDLIALTIK. Cystine bridges form between cysteine 46/cysteine 52 and cysteine 47/cysteine 60. Residues 48–50 form a ser-Xaa-Pro motif, crucial for potent interaction with nAChR region; that stretch reads SLP. Position 59 is a sulfotyrosine (tyrosine 59). Residue cysteine 60 is modified to Cysteine amide.

Belongs to the conotoxin A superfamily. In terms of tissue distribution, expressed by the venom duct.

The protein localises to the secreted. Functionally, alpha-conotoxins act on postsynaptic membranes, they bind to the nicotinic acetylcholine receptors (nAChR) and thus inhibit them. This toxin blocks mammalian nAChRs (alpha-7/CHRNA7 &gt; alpha-3-beta-2/CHRNA3-CHRNB2). In Conus pennaceus (Feathered cone), this protein is Alpha-conotoxin PnIB.